Consider the following 438-residue polypeptide: 23S rRNA (uracil(1939)-C(5))-methyltransferase RlmD (438 aa).

Residues 11–69 (LQPESKHQQVLVEKLDHQGAGIAYLNKKPLFIDGTLPGEEVVTQLTESKSKFARGKLIK) form the TRAM domain. 4 residues coordinate [4Fe-4S] cluster: Cys82, Cys88, Cys91, and Cys169. Gln272, Phe301, Asn306, Glu322, Asn349, and Asp370 together coordinate S-adenosyl-L-methionine. Cys396 (nucleophile) is an active-site residue.

This sequence belongs to the class I-like SAM-binding methyltransferase superfamily. RNA M5U methyltransferase family. RlmD subfamily.

It carries out the reaction uridine(1939) in 23S rRNA + S-adenosyl-L-methionine = 5-methyluridine(1939) in 23S rRNA + S-adenosyl-L-homocysteine + H(+). Catalyzes the formation of 5-methyl-uridine at position 1939 (m5U1939) in 23S rRNA. This Vibrio vulnificus (strain CMCP6) protein is 23S rRNA (uracil(1939)-C(5))-methyltransferase RlmD.